The following is a 117-amino-acid chain: Probable prefoldin subunit 1 (117 aa).

This sequence belongs to the prefoldin subunit beta family. In terms of assembly, heterohexamer of two PFD-alpha type and four PFD-beta type subunits.

It localises to the cytoplasm. Its function is as follows. Binds specifically to cytosolic chaperonin (c-CPN) and transfers target proteins to it. Binds to nascent polypeptide chain and promotes folding in an environment in which there are many competing pathways for nonnative proteins. Has a role in gonadogenesis. This chain is Probable prefoldin subunit 1 (pfd-1), found in Caenorhabditis briggsae.